The sequence spans 376 residues: Mannosyl phosphorylinositol ceramide synthase CSH1 (376 aa).

Transmembrane regions (helical) follow at residues 7-27 (ILII…FDLL) and 274-294 (ILSC…GEFT). A disordered region spans residues 331–351 (NKEKRRNPTRHEYNSRGKRLR). Ser354 bears the Phosphoserine mark.

Belongs to the glycosyltransferase 32 family. Heterodimer of CSH1 and CSG2.

The protein localises to the vacuole membrane. The enzyme catalyses a 1D-myo-inositol-1-phospho-N-[(R)-2-hydroxy-very-long-chain fatty acyl]-(R)-4-hydroxysphingoid base + GDP-alpha-D-mannose = an alpha-D-mannosyl-(1&lt;-&gt;6)-1D-myo-inositol-1-phospho-N-[(R)-2-hydroxy-very-long-chain fatty acyl]-(R)-4-hydroxysphingoid base + GDP + H(+). In terms of biological role, involved in the synthesis of mannosyl phosphorylinositol ceramide. Catalyzes the addition of mannosyl to phosphorylinositol ceramide. This Saccharomyces cerevisiae (strain ATCC 204508 / S288c) (Baker's yeast) protein is Mannosyl phosphorylinositol ceramide synthase CSH1.